Reading from the N-terminus, the 68-residue chain is Conotoxin G1.9 (68 aa).

Residues 1–21 (MGMRMMFTVFLLVVLATTVVS) form the signal peptide. Residues 22-44 (FTSRRGPKSRRGEPVPTTVINYG) constitute a propeptide that is removed on maturation. 2 disulfides stabilise this stretch: Cys46/Cys52 and Cys47/Cys61.

Belongs to the conotoxin A superfamily. As to expression, expressed by the venom duct.

It localises to the secreted. Its function is as follows. Does not show activity on all the human nAChR subtypes studied. This Conus geographus (Geography cone) protein is Conotoxin G1.9.